A 404-amino-acid chain; its full sequence is Protein translocase subunit SecF (404 aa).

Helical transmembrane passes span 15 to 35, 225 to 245, 246 to 266, 275 to 295, 327 to 347, and 355 to 375; these read KWYFLAFSLVFSVAGLISMGA, LLATLYSLGGMLVYLWFRFEL, IYGIGAVVACFHDTIITVGAF, LTVVAAILTLIGYSMNDTIVV, ILTSGLTFLTVLSLYVFGGEV, and LVIGILIGTYSSIAVAAPMLV.

The protein belongs to the SecD/SecF family. SecF subfamily. Forms a complex with SecD. Part of the essential Sec protein translocation apparatus which comprises SecA, SecYEG and auxiliary proteins SecDF. Other proteins may also be involved.

The protein resides in the cell inner membrane. In terms of biological role, part of the Sec protein translocase complex. Interacts with the SecYEG preprotein conducting channel. SecDF uses the proton motive force (PMF) to complete protein translocation after the ATP-dependent function of SecA. This chain is Protein translocase subunit SecF, found in Koribacter versatilis (strain Ellin345).